Here is a 326-residue protein sequence, read N- to C-terminus: tRNA dimethylallyltransferase 2 (326 aa).

14–21 provides a ligand contact to ATP; that stretch reads GPTASGKT. 16-21 contacts substrate; sequence TASGKT. The segment at 39–42 is interaction with substrate tRNA; it reads DSMQ.

This sequence belongs to the IPP transferase family. As to quaternary structure, monomer. Requires Mg(2+) as cofactor.

The enzyme catalyses adenosine(37) in tRNA + dimethylallyl diphosphate = N(6)-dimethylallyladenosine(37) in tRNA + diphosphate. Catalyzes the transfer of a dimethylallyl group onto the adenine at position 37 in tRNAs that read codons beginning with uridine, leading to the formation of N6-(dimethylallyl)adenosine (i(6)A). In Geotalea daltonii (strain DSM 22248 / JCM 15807 / FRC-32) (Geobacter daltonii), this protein is tRNA dimethylallyltransferase 2.